The chain runs to 243 residues: 3-deoxy-manno-octulosonate cytidylyltransferase (243 aa).

It belongs to the KdsB family.

The protein localises to the cytoplasm. The enzyme catalyses 3-deoxy-alpha-D-manno-oct-2-ulosonate + CTP = CMP-3-deoxy-beta-D-manno-octulosonate + diphosphate. It participates in nucleotide-sugar biosynthesis; CMP-3-deoxy-D-manno-octulosonate biosynthesis; CMP-3-deoxy-D-manno-octulosonate from 3-deoxy-D-manno-octulosonate and CTP: step 1/1. Its pathway is bacterial outer membrane biogenesis; lipopolysaccharide biosynthesis. In terms of biological role, activates KDO (a required 8-carbon sugar) for incorporation into bacterial lipopolysaccharide in Gram-negative bacteria. The protein is 3-deoxy-manno-octulosonate cytidylyltransferase of Helicobacter pylori (strain ATCC 700392 / 26695) (Campylobacter pylori).